Consider the following 375-residue polypeptide: 2-methylcitrate synthase (375 aa).

Lysine 72 and histidine 187 together coordinate substrate. Histidine 222 is a catalytic residue. Residue 255-259 coordinates CoA; sequence KIMGF. Histidine 261 is a catalytic residue. A substrate-binding site is contributed by arginine 270. Aspartate 312 is an active-site residue. Residues arginine 337 and arginine 356 each contribute to the substrate site.

It belongs to the citrate synthase family. In terms of assembly, homodimer.

The enzyme catalyses propanoyl-CoA + oxaloacetate + H2O = (2S,3S)-2-methylcitrate + CoA + H(+). It carries out the reaction oxaloacetate + acetyl-CoA + H2O = citrate + CoA + H(+). It participates in organic acid metabolism; propanoate degradation. Its pathway is carbohydrate metabolism; tricarboxylic acid cycle; isocitrate from oxaloacetate: step 1/2. Functionally, involved in the catabolism of short chain fatty acids (SCFA) via the tricarboxylic acid (TCA)(acetyl degradation route) and via the 2-methylcitrate cycle II (propionate degradation route). Catalyzes the Claisen condensation of propionyl-CoA and oxaloacetate (OAA) to yield 2-methylcitrate (2-MC) and CoA. Catalyzes the condensation of oxaloacetate with acetyl-CoA. The polypeptide is 2-methylcitrate synthase (prpC) (Shewanella oneidensis (strain ATCC 700550 / JCM 31522 / CIP 106686 / LMG 19005 / NCIMB 14063 / MR-1)).